Consider the following 251-residue polypeptide: Triosephosphate isomerase (251 aa).

9–11 (NWK) is a substrate binding site. Residue histidine 95 is the Electrophile of the active site. The Proton acceptor role is filled by glutamate 167. Residues glycine 173, serine 213, and 234 to 235 (GG) each bind substrate.

Belongs to the triosephosphate isomerase family. In terms of assembly, homodimer.

It is found in the cytoplasm. It carries out the reaction D-glyceraldehyde 3-phosphate = dihydroxyacetone phosphate. The protein operates within carbohydrate biosynthesis; gluconeogenesis. Its pathway is carbohydrate degradation; glycolysis; D-glyceraldehyde 3-phosphate from glycerone phosphate: step 1/1. In terms of biological role, involved in the gluconeogenesis. Catalyzes stereospecifically the conversion of dihydroxyacetone phosphate (DHAP) to D-glyceraldehyde-3-phosphate (G3P). This Geotalea uraniireducens (strain Rf4) (Geobacter uraniireducens) protein is Triosephosphate isomerase.